We begin with the raw amino-acid sequence, 373 residues long: Anhydro-N-acetylmuramic acid kinase (373 aa).

13 to 20 (GTSMDGID) provides a ligand contact to ATP.

The protein belongs to the anhydro-N-acetylmuramic acid kinase family.

It catalyses the reaction 1,6-anhydro-N-acetyl-beta-muramate + ATP + H2O = N-acetyl-D-muramate 6-phosphate + ADP + H(+). It participates in amino-sugar metabolism; 1,6-anhydro-N-acetylmuramate degradation. It functions in the pathway cell wall biogenesis; peptidoglycan recycling. Its function is as follows. Catalyzes the specific phosphorylation of 1,6-anhydro-N-acetylmuramic acid (anhMurNAc) with the simultaneous cleavage of the 1,6-anhydro ring, generating MurNAc-6-P. Is required for the utilization of anhMurNAc either imported from the medium or derived from its own cell wall murein, and thus plays a role in cell wall recycling. In Agrobacterium fabrum (strain C58 / ATCC 33970) (Agrobacterium tumefaciens (strain C58)), this protein is Anhydro-N-acetylmuramic acid kinase.